The sequence spans 505 residues: Deoxyguanosinetriphosphate triphosphohydrolase (505 aa).

One can recognise an HD domain in the interval 66–273 (RLTHSMEVQQ…MEAADDISYC (208 aa)).

The protein belongs to the dGTPase family. Type 1 subfamily. In terms of assembly, homotetramer. Requires Mg(2+) as cofactor.

The enzyme catalyses dGTP + H2O = 2'-deoxyguanosine + triphosphate + H(+). Its function is as follows. dGTPase preferentially hydrolyzes dGTP over the other canonical NTPs. The protein is Deoxyguanosinetriphosphate triphosphohydrolase of Salmonella paratyphi A (strain AKU_12601).